We begin with the raw amino-acid sequence, 378 residues long: Erythronate-4-phosphate dehydrogenase (378 aa).

Substrate is bound by residues S45 and T66. D146 provides a ligand contact to NAD(+). The active site involves R207. D231 is an NAD(+) binding site. The active site involves E236. H253 acts as the Proton donor in catalysis. NAD(+) is bound at residue G256.

Belongs to the D-isomer specific 2-hydroxyacid dehydrogenase family. PdxB subfamily. In terms of assembly, homodimer.

The protein resides in the cytoplasm. It carries out the reaction 4-phospho-D-erythronate + NAD(+) = (R)-3-hydroxy-2-oxo-4-phosphooxybutanoate + NADH + H(+). Its pathway is cofactor biosynthesis; pyridoxine 5'-phosphate biosynthesis; pyridoxine 5'-phosphate from D-erythrose 4-phosphate: step 2/5. Functionally, catalyzes the oxidation of erythronate-4-phosphate to 3-hydroxy-2-oxo-4-phosphonooxybutanoate. The sequence is that of Erythronate-4-phosphate dehydrogenase from Wigglesworthia glossinidia brevipalpis.